The following is a 469-amino-acid chain: Uronate isomerase (469 aa).

The protein belongs to the metallo-dependent hydrolases superfamily. Uronate isomerase family.

The catalysed reaction is D-glucuronate = D-fructuronate. It carries out the reaction aldehydo-D-galacturonate = keto-D-tagaturonate. Its pathway is carbohydrate metabolism; pentose and glucuronate interconversion. The polypeptide is Uronate isomerase (Mesorhizobium japonicum (strain LMG 29417 / CECT 9101 / MAFF 303099) (Mesorhizobium loti (strain MAFF 303099))).